Consider the following 789-residue polypeptide: Phenylalanine--tRNA ligase beta subunit (789 aa).

In terms of domain architecture, tRNA-binding spans 38–151 (KKHLQSFVVV…NTYNVGESFF (114 aa)). The B5 domain occupies 398–474 (HNDILLNFSP…RLYGYDKILE (77 aa)). Mg(2+) is bound by residues D452, D458, E461, and E462. Positions 694 to 787 (LRYQSVKRDF…ISKGFNGILR (94 aa)) constitute an FDX-ACB domain.

The protein belongs to the phenylalanyl-tRNA synthetase beta subunit family. Type 1 subfamily. As to quaternary structure, tetramer of two alpha and two beta subunits. Mg(2+) serves as cofactor.

The protein resides in the cytoplasm. The catalysed reaction is tRNA(Phe) + L-phenylalanine + ATP = L-phenylalanyl-tRNA(Phe) + AMP + diphosphate + H(+). The chain is Phenylalanine--tRNA ligase beta subunit from Ehrlichia ruminantium (strain Gardel).